Consider the following 838-residue polypeptide: Semaphorin-4G (838 aa).

A signal peptide spans 1 to 17; the sequence is MWGRLWPLLLSILTATA. Topologically, residues 18–675 are extracellular; the sequence is VPGPSLRRPS…GAQLAPDVRL (658 aa). The 471-residue stretch at 35-505 folds into the Sema domain; it reads RMTIPYEELS…APSGVIQLPL (471 aa). 3 N-linked (GlcNAc...) asparagine glycosylation sites follow: Asn-55, Asn-111, and Asn-126. A disulfide bridge links Cys-104 with Cys-115. Disulfide bonds link Cys-133/Cys-142, Cys-270/Cys-377, and Cys-294/Cys-337. N-linked (GlcNAc...) asparagine glycosylation occurs at Asn-388. Positions 507–558 constitute a PSI domain; the sequence is SCSRYRSCYDCILARDPYCGWDPGTHACAAATTIANRTALIQDIERGNRGCE. Cystine bridges form between Cys-508–Cys-525 and Cys-517–Cys-534. 2 N-linked (GlcNAc...) asparagine glycosylation sites follow: Asn-542 and Asn-598. The 83-residue stretch at 567-649 folds into the Ig-like C2-type domain; sequence PPLKTRSVLR…RTLLASYSLT (83 aa). A disulfide bridge links Cys-584 with Cys-632. A helical transmembrane segment spans residues 676–696; the sequence is LYVLAIAALGGLCLILASSLL. Topologically, residues 697–838 are cytoplasmic; that stretch reads YVACLREGRR…LVEQLDESSV (142 aa). Residues 723–777 are disordered; it reads SAVQLQTVSGQCPGEEDEGDDEGAGGLEGSCLQIIPGEGAPAPPPPPPPPPPAEL. The segment covering 736–745 has biased composition (acidic residues); the sequence is GEEDEGDDEG. The span at 763 to 775 shows a compositional bias: pro residues; it reads PAPPPPPPPPPPA. Ser-795 and Ser-837 each carry phosphoserine.

It belongs to the semaphorin family. As to quaternary structure, interacts with PLXNB2.

Its subcellular location is the cell membrane. Its function is as follows. Cell surface receptor for PLXNB2. May play a role in axon guidance. This Homo sapiens (Human) protein is Semaphorin-4G (SEMA4G).